A 189-amino-acid chain; its full sequence is Peptidyl-tRNA hydrolase (189 aa).

Y14 contributes to the tRNA binding site. H19 acts as the Proton acceptor in catalysis. The tRNA site is built by Y64, N66, and N112.

It belongs to the PTH family. In terms of assembly, monomer.

The protein localises to the cytoplasm. The catalysed reaction is an N-acyl-L-alpha-aminoacyl-tRNA + H2O = an N-acyl-L-amino acid + a tRNA + H(+). Hydrolyzes ribosome-free peptidyl-tRNAs (with 1 or more amino acids incorporated), which drop off the ribosome during protein synthesis, or as a result of ribosome stalling. In terms of biological role, catalyzes the release of premature peptidyl moieties from peptidyl-tRNA molecules trapped in stalled 50S ribosomal subunits, and thus maintains levels of free tRNAs and 50S ribosomes. The sequence is that of Peptidyl-tRNA hydrolase from Brevibacillus brevis (strain 47 / JCM 6285 / NBRC 100599).